Consider the following 221-residue polypeptide: MTTLFIVGTDTEVGKTVVTSALAAYWQTYHSSESLGVIKLLQTGIGDVEHYQRLLPHVEVVNPLRYETPVAPPVAAEKENRSIPLDQVWQGLNDLQQRKNLVLAEGLGGLGSPVTWELTVADLAGEWGLPTVLVVPVKLGAIAQTVANVALARQYKVNLKGIIFSCPRPLSHEEIVNFAPITLIESLTKTPVLGMISYLENIEDITKLAHIASSLDLEMLF.

An ATP-binding site is contributed by 12 to 17 (EVGKTV). Thr16 serves as a coordination point for Mg(2+). Lys39 is an active-site residue. Substrate is bound at residue Thr43. ATP contacts are provided by residues Asp47, 105–108 (EGLG), and 165–166 (SC). 2 residues coordinate Mg(2+): Asp47 and Glu105.

It belongs to the dethiobiotin synthetase family. In terms of assembly, homodimer. It depends on Mg(2+) as a cofactor.

It localises to the cytoplasm. It carries out the reaction (7R,8S)-7,8-diammoniononanoate + CO2 + ATP = (4R,5S)-dethiobiotin + ADP + phosphate + 3 H(+). The enzyme catalyses (7R,8S)-8-amino-7-(carboxyamino)nonanoate + ATP = (4R,5S)-dethiobiotin + ADP + phosphate + H(+). It participates in cofactor biosynthesis; biotin biosynthesis; biotin from 7,8-diaminononanoate: step 1/2. Functionally, catalyzes a mechanistically unusual reaction, the ATP-dependent insertion of CO2 between the N7 and N8 nitrogen atoms of 7,8-diaminopelargonic acid (DAPA, also called 7,8-diammoniononanoate) to form a ureido ring. This cyanobacterium does not encode bioA (which catalyzes the formation of the precursor for this reaction in the cannonical pathway), instead it encodes bioU, which replaces bioA and also performs the first half of the cannonical BioD reaction. Thus in this organism BioD has a different substrate. The polypeptide is ATP-dependent dethiobiotin synthetase BioD (Crocosphaera subtropica (strain ATCC 51142 / BH68) (Cyanothece sp. (strain ATCC 51142))).